A 344-amino-acid polypeptide reads, in one-letter code: MLSSFPHRKTWRKSKKTVKVTRSYPTFPSLNAWEEFRGLLPVDGEPNPGAGLGVEEGLLCRVVHSPEFNLFLDSVVFESNFIQVKRGRNWRDVYKASNTMALGVTSSVPCLPLPNILLMASVKWHQGQNQTWNRPSIAPNIFLKRILPLRFVELQVCDHYQRILQLRTVTEKIYYLKLHPDHPETVFHFWIRLVQILQKGLSITTKDPRILVTHCLVPKNCSSPSGDSKLVQKKLQASQPSESLIQLMTKGESEALSQIFADLHQQNQLSFRSSRKVETNKNSSGKDSSREDSIPCTCDLRWRASFTYGEWERENPSGLQPLSLLSTLAASTGPQLAPPIGNSI.

The interval 271-293 (FRSSRKVETNKNSSGKDSSREDS) is disordered.

It belongs to the GARIN family.

The protein resides in the golgi apparatus. Functionally, RAB2B effector protein required for accurate acrosome formation and normal male fertility. In complex with RAB2A/RAB2B, seems to suppress excessive vesicle trafficking during acrosome formation. This Homo sapiens (Human) protein is Golgi-associated RAB2 interactor protein 1B.